The chain runs to 427 residues: tRNA(Ile)-lysidine synthase (427 aa).

Position 21–26 (21–26 (SGGADS)) interacts with ATP.

The protein belongs to the tRNA(Ile)-lysidine synthase family.

Its subcellular location is the cytoplasm. The enzyme catalyses cytidine(34) in tRNA(Ile2) + L-lysine + ATP = lysidine(34) in tRNA(Ile2) + AMP + diphosphate + H(+). In terms of biological role, ligates lysine onto the cytidine present at position 34 of the AUA codon-specific tRNA(Ile) that contains the anticodon CAU, in an ATP-dependent manner. Cytidine is converted to lysidine, thus changing the amino acid specificity of the tRNA from methionine to isoleucine. This Actinobacillus succinogenes (strain ATCC 55618 / DSM 22257 / CCUG 43843 / 130Z) protein is tRNA(Ile)-lysidine synthase.